A 753-amino-acid chain; its full sequence is 5-methyltetrahydropteroyltriglutamate--homocysteine methyltransferase (753 aa).

5-methyltetrahydropteroyltri-L-glutamate is bound by residues 17–20 (RELK) and lysine 117. Residues 431–433 (IGS) and glutamate 484 each bind L-homocysteine. Residues 431-433 (IGS) and glutamate 484 each bind L-methionine. Residues 515 to 516 (RC) and tryptophan 561 each bind 5-methyltetrahydropteroyltri-L-glutamate. Aspartate 599 lines the L-homocysteine pocket. An L-methionine-binding site is contributed by aspartate 599. Residue glutamate 605 participates in 5-methyltetrahydropteroyltri-L-glutamate binding. Histidine 641, cysteine 643, and glutamate 665 together coordinate Zn(2+). The active-site Proton donor is histidine 694. Cysteine 726 lines the Zn(2+) pocket.

Belongs to the vitamin-B12 independent methionine synthase family. Requires Zn(2+) as cofactor.

It catalyses the reaction 5-methyltetrahydropteroyltri-L-glutamate + L-homocysteine = tetrahydropteroyltri-L-glutamate + L-methionine. It participates in amino-acid biosynthesis; L-methionine biosynthesis via de novo pathway; L-methionine from L-homocysteine (MetE route): step 1/1. Catalyzes the transfer of a methyl group from 5-methyltetrahydrofolate to homocysteine resulting in methionine formation. The sequence is that of 5-methyltetrahydropteroyltriglutamate--homocysteine methyltransferase from Escherichia coli O7:K1 (strain IAI39 / ExPEC).